The following is a 339-amino-acid chain: Anthranilate phosphoribosyltransferase (339 aa).

Residues G79, 82–83, S87, 89–92, 107–115, and S119 contribute to the 5-phospho-alpha-D-ribose 1-diphosphate site; these read GD, NIST, and KHGNRSISS. G79 is an anthranilate binding site. S91 provides a ligand contact to Mg(2+). An anthranilate-binding site is contributed by N110. R165 provides a ligand contact to anthranilate. Residues D224 and E225 each coordinate Mg(2+).

This sequence belongs to the anthranilate phosphoribosyltransferase family. As to quaternary structure, homodimer. Mg(2+) serves as cofactor.

The enzyme catalyses N-(5-phospho-beta-D-ribosyl)anthranilate + diphosphate = 5-phospho-alpha-D-ribose 1-diphosphate + anthranilate. It functions in the pathway amino-acid biosynthesis; L-tryptophan biosynthesis; L-tryptophan from chorismate: step 2/5. Functionally, catalyzes the transfer of the phosphoribosyl group of 5-phosphorylribose-1-pyrophosphate (PRPP) to anthranilate to yield N-(5'-phosphoribosyl)-anthranilate (PRA). The protein is Anthranilate phosphoribosyltransferase of Listeria monocytogenes serotype 4a (strain HCC23).